Consider the following 426-residue polypeptide: Glutamate-1-semialdehyde 2,1-aminomutase (426 aa).

Lysine 265 carries the post-translational modification N6-(pyridoxal phosphate)lysine.

This sequence belongs to the class-III pyridoxal-phosphate-dependent aminotransferase family. HemL subfamily. As to quaternary structure, homodimer. It depends on pyridoxal 5'-phosphate as a cofactor.

It is found in the cytoplasm. The enzyme catalyses (S)-4-amino-5-oxopentanoate = 5-aminolevulinate. It participates in porphyrin-containing compound metabolism; protoporphyrin-IX biosynthesis; 5-aminolevulinate from L-glutamyl-tRNA(Glu): step 2/2. The chain is Glutamate-1-semialdehyde 2,1-aminomutase from Aliarcobacter butzleri (strain RM4018) (Arcobacter butzleri).